A 283-amino-acid chain; its full sequence is MKQYLDLCQRIVDQGVWVENERTGKRCLTVINADLTYDVGNNQFPLVTTRKSFWKAAVAELLGYIRGYDNAADFRQLGTKTWDANANLNQAWLNNPYRKGEDDMGRVYGVQGRAWAKPDGGHIDQLKKIVDDLSRGVDDRGEILNFYNPGEFHMGCLRPCMYSHHFSLLGDTLYLNSTQRSCDVPLGLNFNMVQVYVFLALMAQITGKKPGLAYHKIVNAHIYQDQLELMRDVQLKREPFPAPQFHINPKIKTLQDLETWVTLDDFDVTGYQFHDPIQYPFSV.

Position 22 (Arg-22) interacts with dUMP. The Nucleophile role is filled by Cys-160. DUMP contacts are provided by residues 180 to 183 (RSCD), Asn-191, and 221 to 223 (HIY). Residue Asp-183 participates in (6R)-5,10-methylene-5,6,7,8-tetrahydrofolate binding. Ser-282 provides a ligand contact to (6R)-5,10-methylene-5,6,7,8-tetrahydrofolate.

Belongs to the thymidylate synthase family. Bacterial-type ThyA subfamily. As to quaternary structure, homodimer.

It localises to the cytoplasm. It catalyses the reaction dUMP + (6R)-5,10-methylene-5,6,7,8-tetrahydrofolate = 7,8-dihydrofolate + dTMP. It functions in the pathway pyrimidine metabolism; dTTP biosynthesis. Functionally, catalyzes the reductive methylation of 2'-deoxyuridine-5'-monophosphate (dUMP) to 2'-deoxythymidine-5'-monophosphate (dTMP) while utilizing 5,10-methylenetetrahydrofolate (mTHF) as the methyl donor and reductant in the reaction, yielding dihydrofolate (DHF) as a by-product. This enzymatic reaction provides an intracellular de novo source of dTMP, an essential precursor for DNA biosynthesis. This Vibrio cholerae serotype O1 (strain ATCC 39541 / Classical Ogawa 395 / O395) protein is Thymidylate synthase.